A 508-amino-acid chain; its full sequence is UDP-N-acetylmuramoyl-L-alanyl-D-glutamate--2,6-diaminopimelate ligase (508 aa).

Ser33 serves as a coordination point for UDP-N-acetyl-alpha-D-muramoyl-L-alanyl-D-glutamate. 121-127 (GTNGKST) is an ATP binding site. UDP-N-acetyl-alpha-D-muramoyl-L-alanyl-D-glutamate is bound by residues Asn162, 163–164 (TT), Ser190, Gln196, and Arg198. Lys230 is subject to N6-carboxylysine. Residues Arg399, 423–426 (DNPR), Gly474, and Glu478 each bind meso-2,6-diaminopimelate. The Meso-diaminopimelate recognition motif signature appears at 423–426 (DNPR).

The protein belongs to the MurCDEF family. MurE subfamily. It depends on Mg(2+) as a cofactor. In terms of processing, carboxylation is probably crucial for Mg(2+) binding and, consequently, for the gamma-phosphate positioning of ATP.

It localises to the cytoplasm. It carries out the reaction UDP-N-acetyl-alpha-D-muramoyl-L-alanyl-D-glutamate + meso-2,6-diaminopimelate + ATP = UDP-N-acetyl-alpha-D-muramoyl-L-alanyl-gamma-D-glutamyl-meso-2,6-diaminopimelate + ADP + phosphate + H(+). Its pathway is cell wall biogenesis; peptidoglycan biosynthesis. Its function is as follows. Catalyzes the addition of meso-diaminopimelic acid to the nucleotide precursor UDP-N-acetylmuramoyl-L-alanyl-D-glutamate (UMAG) in the biosynthesis of bacterial cell-wall peptidoglycan. This chain is UDP-N-acetylmuramoyl-L-alanyl-D-glutamate--2,6-diaminopimelate ligase, found in Buchnera aphidicola subsp. Baizongia pistaciae (strain Bp).